A 358-amino-acid polypeptide reads, in one-letter code: MPLVANSDLPAFERLREEGETVIPRDVALHQDIREMHIGLLNMMPDAALAATERQFFRLIGESNQIAQFYIHPFTLKEIQRSLEANHYVERYYQTFEQIQAEGLDALIITGANVTQPQLSLEPFWKPLIKVISWAYENVTSTLCSCLATHAVLDFRYGQKRRRLSSKRWGVYSHRVVNRSHPLVRGVNTRFDVPHSRFNEISRDQFEAAGLHVLAESEKGGAHLAVSEDLFRIVFCQGHPEYDSISLLKEYKREILRFASGQRDNYPPFPENYFSPKIQAILEEYQEQIIIARDKDLPLPQLPEPLIVDYLDNTWHDTAEAIINNWMGNVYQITHSDRKRPFMEDIAPDDPLGLRRPT.

Cysteine 146 acts as the Acyl-thioester intermediate in catalysis. Lysine 167 and serine 196 together coordinate substrate. Histidine 239 (proton acceptor) is an active-site residue. Residue glutamate 241 is part of the active site. Arginine 253 is a binding site for substrate.

The protein belongs to the MetA family.

Its subcellular location is the cytoplasm. The enzyme catalyses L-homoserine + succinyl-CoA = O-succinyl-L-homoserine + CoA. It functions in the pathway amino-acid biosynthesis; L-methionine biosynthesis via de novo pathway; O-succinyl-L-homoserine from L-homoserine: step 1/1. Functionally, transfers a succinyl group from succinyl-CoA to L-homoserine, forming succinyl-L-homoserine. In Nitrosococcus oceani (strain ATCC 19707 / BCRC 17464 / JCM 30415 / NCIMB 11848 / C-107), this protein is Homoserine O-succinyltransferase.